Consider the following 467-residue polypeptide: MDTAGIRLTPKEIVSKLNEYIVGQNDAKRKVAIALRNRYRRSLLDEESKQEISPKNILMIGPTGVGKTEIARRMAKVVGAPFIKVEATKFTELGYVGRDVESMVRDLVDVSVRLVKAQKKSLVQDEATAKANEKLVKLLVPSMKKKASQTNNPLESLFGGAIPNFGQNNEDEEEPPTEEIKTKRSEIKRQLEEGKLEKEKVRIKVEQDPGALGMLGTNQNQQMQEMMNQLMPKKKVEREVAVETARKILADSYADELIDQESANQEALELAEQMGIIFIDEIDKVATNNHNSGQDVSRQGVQRDILPILEGSVIQTKYGTVNTEHMLFIGAGAFHVSKPSDLIPELQGRFPIRVELDSLSVEDFVRILTEPKLSLIKQYEALLQTEEVTVNFTDEAITRLAEIAYQVNQDTDNIGARRLHTILEKMLEDLSFEAPSMPNAVVDITPQYVDDKLKSISTNKDLSAFIL.

ATP contacts are provided by residues Val-22 and 64-69 (GVGKTE). The interval 149-192 (QTNNPLESLFGGAIPNFGQNNEDEEEPPTEEIKTKRSEIKRQLE) is disordered. Over residues 178 to 192 (EEIKTKRSEIKRQLE) the composition is skewed to basic and acidic residues. ATP is bound by residues Asp-280, Glu-345, and Arg-417.

It belongs to the ClpX chaperone family. HslU subfamily. In terms of assembly, a double ring-shaped homohexamer of HslV is capped on each side by a ring-shaped HslU homohexamer. The assembly of the HslU/HslV complex is dependent on binding of ATP.

It localises to the cytoplasm. In terms of biological role, ATPase subunit of a proteasome-like degradation complex; this subunit has chaperone activity. The binding of ATP and its subsequent hydrolysis by HslU are essential for unfolding of protein substrates subsequently hydrolyzed by HslV. HslU recognizes the N-terminal part of its protein substrates and unfolds these before they are guided to HslV for hydrolysis. The protein is ATP-dependent protease ATPase subunit HslU of Staphylococcus aureus (strain Mu3 / ATCC 700698).